Consider the following 1782-residue polypeptide: MRFIVLLFICSFIYPCYVSSIGFRRISKVSLKKTKCEDGYFQCNSGECIPVDKKCDYIDHCIDGSDEDFECDHLDEKSFITCAKDQFKCKNQECIPAAKYCDMVNDCLDESDEHDGCVKHLNCTNKFLCTDGHCINKEWVCDGRNDCPDGNDEWNCKANKTSSASSCKTENYQYMCANHRCISLKVVCDKKDDCGDGSDEGPGCTQFNCSSAGCQSNCHQTPKGSVCTCKPGYKLQKDNRTCNDIDECQAYGICDQDCMNVPGSYACTCQREYYLENDKRTCKARAGEATLVFSTRTSILGMHVDSEKFFSLATNLNHAVGVAMYGDYVYWSNLEENGYNTIVKKRTYHPQAPNEVIVTTGLALITGIDVDWITKNIYFADEDNHCIGVCTNDGTYCTVLIKDTDKPTGVALLPTQGKMYWSDWGTFPHIAVAGMDGKNVRIFVNVKLEWPKSVTIDYPNERLYWVDAKSKMIESVRLDGTDRRIVLHDIIQEPFSMTVFQNKLYWSDWESNGIQTCNKFTGKDWKILIRNHNKPYSVHMDHSAIKPNIDNPCYSNPCSQLCMLNQNKGYTCGCTLDKKLNADKHTCQDVKKNQHLLIIQGRKFINYYHEFLGKPKVMTLSLQHMSQQSYNNLVNIISDPLSGQIIICHLQLSTPFLTSTTDILRYDPVHHSSEKIVTINKIFFELAFDYIGNNLYTTNTVNQSIEVINLNTKAMTAFYFKDEVPKYIALAPEESKMFVAFQKSMHSISGLTLYEMQMNGLGKRKLIREGLIGPQLPMYYDRDSKTLFVSDLLPGYIYSHSAQDTRILRSGLKSPHSLTVAGDNLFWIESQNKLYSTNFRTASVKQKTVEFDLSKLNDNMTSLPGHLTPYSRDAQYVVTLRKDDIPKHDCQKNNGNCSHVCLPSLITSFICACPPGMELSNDNRTCISHHECSKNEYKCSEHNICIQRNQLCDGIENCPNGEDETSECRIKGRCKENQFMCKNGDCIRLKDRCNSRYDCTDQSDEQNCEKPKCKSDEFQCKFTETCIPKTKMCDSNPDCDDLSDEEDCRKVECTSNEFKCNNGKCIPNTFVCDNDNDCEDGEDEAAEKCYSKIACKMPKMFKCPNGDCISDSLLCNGINDCNDGSDEVHCLSNVTTHLVNCSLNEYRCLGTDICLPKNVRCDGKNDCPQSDDEQNCTYCFENEFACDNKRCIPELWVCDKANDCGDNSDEKNCDGSKRNFIESNECDEFKCSVGTCLPYSKVCDGNRDCPDGSDETGKCQTACTVNNFCKGMCYKTPAGAVCGCQSGYRLAVDMISCEDINECELDICSQMCRNTIGSYECFCKDEFIIRNDKTSCKAVGPAMEFITVTDNDIRKMTHNLHSTTQLLFPLMGVRVSGLDVNAVSDSVYWSNDEFGTIKKLNIRTNEIVTVKIVEHPQALAVDWITGNVYVNDNSHLNTIKVCNLEKGKCATLVKIQDKMKVASVIVDSINRWLFWAEISLEADHPTSKICRTDMTGADMKIIASDLGFVRGMTIDHVKSKLYWSDDFYKTVESSNFDGSQRKVVLTLNMNHALSISIFEQSLYFLSSDNLLSSCKMYGKRSCEHVNIGANNVFRLFSILHISRQVPFANPCDAEYCDYMCVLKKENATCICSDGESIESNSTCNIKNDLKFVESINFSRNTRNISGIYSITIIVLLVSVLLLCVYYYYQKNKLKSKPASNLSCSSIHFQNPSYDRSDEIEVMLDSMASSELSPGQHEYINPINNKGMKAAENNAKKSNQCSEGKNIEEEKQDALIYFVHNSK.

The N-terminal stretch at 1–18 is a signal peptide; it reads MRFIVLLFICSFIYPCYV. The Extracellular segment spans residues 19–1663; it reads SSIGFRRISK…SINFSRNTRN (1645 aa). LDL-receptor class A domains are found at residues 35 to 72, 81 to 118, and 122 to 157; these read KCEDGYFQCNSGECIPVDKKCDYIDHCIDGSDEDFECD, TCAKDQFKCKNQECIPAAKYCDMVNDCLDESDEHDGCV, and NCTNKFLCTDGHCINKEWVCDGRNDCPDGNDEWNCK. 6 disulfide bridges follow: Cys36-Cys48, Cys43-Cys61, Cys55-Cys71, Cys82-Cys94, Cys89-Cys107, and Cys101-Cys117. Asn122 carries an N-linked (GlcNAc...) asparagine glycan. Intrachain disulfides connect Cys123–Cys134, Cys129–Cys147, and Cys141–Cys156. The N-linked (GlcNAc...) asparagine glycan is linked to Asn159. An LDL-receptor class A 4 domain is found at 166–205; sequence SCKTENYQYMCANHRCISLKVVCDKKDDCGDGSDEGPGCT. Intrachain disulfides connect Cys167/Cys181, Cys176/Cys194, and Cys188/Cys204. N-linked (GlcNAc...) asparagine glycans are attached at residues Asn208 and Asn239. The region spanning 208 to 243 is the EGF-like 1 domain; that stretch reads NCSSAGCQSNCHQTPKGSVCTCKPGYKLQKDNRTCN. Residues 244–283 form the EGF-like; calcium-binding domain; the sequence is DIDECQAYGICDQDCMNVPGSYACTCQREYYLENDKRTCK. 3 disulfides stabilise this stretch: Cys248/Cys258, Cys254/Cys267, and Cys269/Cys282. LDL-receptor class B repeat units follow at residues 327–374, 375–416, 417–460, 461–501, and 502–544; these read DYVY…DWIT, KNIY…LPTQ, GKMY…DYPN, ERLY…TVFQ, and NKLY…DHSA. Residues 552-588 enclose the EGF-like 2 domain; sequence PCYSNPCSQLCMLNQNKGYTCGCTLDKKLNADKHTCQ. Residues Asn702, Asn859, Asn896, and Asn923 are each glycosylated (N-linked (GlcNAc...) asparagine). One can recognise an EGF-like 3 domain in the interval 889–927; sequence DCQKNNGNCSHVCLPSLITSFICACPPGMELSNDNRTCI. LDL-receptor class A domains lie at 931–969, 973–1009, 1012–1049, 1052–1090, and 1094–1131; these read ECSKNEYKCSEHNICIQRNQLCDGIENCPNGEDETSECR, RCKENQFMCKNGDCIRLKDRCNSRYDCTDQSDEQNCE, KCKSDEFQCKFTETCIPKTKMCDSNPDCDDLSDEEDCR, ECTSNEFKCNNGKCIPNTFVCDNDNDCEDGEDEAAEKCY, and ACKMPKMFKCPNGDCISDSLLCNGINDCNDGSDEVHCL. 15 cysteine pairs are disulfide-bonded: Cys932-Cys945, Cys939-Cys958, Cys952-Cys968, Cys974-Cys986, Cys981-Cys999, Cys993-Cys1008, Cys1013-Cys1026, Cys1020-Cys1039, Cys1033-Cys1048, Cys1053-Cys1065, Cys1060-Cys1078, Cys1072-Cys1089, Cys1095-Cys1108, Cys1103-Cys1121, and Cys1115-Cys1130. N-linked (GlcNAc...) asparagine glycosylation is found at Asn1133 and Asn1140. LDL-receptor class A domains lie at 1140–1177, 1178–1214, and 1225–1260; these read NCSLNEYRCLGTDICLPKNVRCDGKNDCPQSDDEQNCT, YCFENEFACDNKRCIPELWVCDKANDCGDNSDEKNCD, and ECDEFKCSVGTCLPYSKVCDGNRDCPDGSDETGKCQ. Intrachain disulfides connect Cys1141–Cys1154, Cys1148–Cys1167, Cys1161–Cys1176, Cys1179–Cys1191, Cys1186–Cys1204, Cys1198–Cys1213, Cys1226–Cys1236, Cys1231–Cys1249, and Cys1243–Cys1259. Asn1175 carries N-linked (GlcNAc...) asparagine glycosylation. In terms of domain architecture, EGF-like 4 spans 1262–1298; sequence ACTVNNFCKGMCYKTPAGAVCGCQSGYRLAVDMISCE. LDL-receptor class B repeat units follow at residues 1385 to 1425, 1471 to 1518, and 1519 to 1561; these read DSVY…DWIT, RWLF…DHVK, and SKLY…FEQS. N-linked (GlcNAc...) asparagine glycosylation is found at Asn1626, Asn1640, and Asn1656. A helical transmembrane segment spans residues 1664–1684; that stretch reads ISGIYSITIIVLLVSVLLLCV. Residues 1685 to 1782 lie on the Cytoplasmic side of the membrane; sequence YYYYQKNKLK…ALIYFVHNSK (98 aa).

As to expression, expressed in ovaries of reproductive females.

It localises to the membrane. Its function is as follows. Involved in uptake of vitellogenin by endocytosis. Expression is regulated by the juvenile hormone analog, methoprene (in vitro). This chain is Vitellogenin receptor, found in Solenopsis invicta (Red imported fire ant).